A 154-amino-acid polypeptide reads, in one-letter code: Protein phosphatase 1 regulatory subunit 27 (154 aa).

ANK repeat units lie at residues 63 to 92 and 96 to 125; these read SGLAALHEAVLSGNLECVKLLVKYGADIHQ and TGWTPLHIACSDGYPDIARYLISLGADRDA.

In terms of assembly, interacts with DYSF and PPP1CA.

Its function is as follows. Inhibits phosphatase activity of protein phosphatase 1 (PP1) complexes. The sequence is that of Protein phosphatase 1 regulatory subunit 27 (Ppp1r27) from Mus musculus (Mouse).